We begin with the raw amino-acid sequence, 364 residues long: DNA polymerase IV (364 aa).

In terms of domain architecture, UmuC spans 14–198; that stretch reads IIHIDMDAFF…LPIEKFHGVG (185 aa). Mg(2+)-binding residues include D18 and D116. E117 is an active-site residue.

Belongs to the DNA polymerase type-Y family. As to quaternary structure, monomer. It depends on Mg(2+) as a cofactor.

The protein resides in the cytoplasm. The enzyme catalyses DNA(n) + a 2'-deoxyribonucleoside 5'-triphosphate = DNA(n+1) + diphosphate. In terms of biological role, poorly processive, error-prone DNA polymerase involved in untargeted mutagenesis. Copies undamaged DNA at stalled replication forks, which arise in vivo from mismatched or misaligned primer ends. These misaligned primers can be extended by PolIV. Exhibits no 3'-5' exonuclease (proofreading) activity. May be involved in translesional synthesis, in conjunction with the beta clamp from PolIII. In Streptococcus pyogenes serotype M5 (strain Manfredo), this protein is DNA polymerase IV.